The primary structure comprises 86 residues: Small ribosomal subunit protein bS16 (86 aa).

This sequence belongs to the bacterial ribosomal protein bS16 family.

This Legionella pneumophila (strain Paris) protein is Small ribosomal subunit protein bS16.